The sequence spans 421 residues: Cytochrome c biogenesis protein Ccs1 (421 aa).

Helical transmembrane passes span 12-32, 71-91, and 157-177; these read LRFAISILLIIASCSVIGTVI, TWWFLGFIALFGLSLFTCTIL, and IAPIIVHFSMILILIGAIFGA.

Belongs to the Ccs1/CcsB family. May interact with CcsA.

It is found in the plastid. It localises to the chloroplast thylakoid membrane. Its function is as follows. Required during biogenesis of c-type cytochromes (cytochrome c6 and cytochrome f) at the step of heme attachment. This chain is Cytochrome c biogenesis protein Ccs1, found in Trieres chinensis (Marine centric diatom).